The primary structure comprises 465 residues: DEAD-box ATP-dependent RNA helicase 55 (465 aa).

The Q motif signature appears at 17–45; that stretch reads FSELKPPLSEDIIEALDRSGFEVCTPVQA. The Helicase ATP-binding domain maps to 48–219; the sequence is IPFLCSHKDV…KAGLRNPYLK (172 aa). 61 to 68 is an ATP binding site; sequence AATGSGKT. Residues 167–170 carry the DEAD box motif; the sequence is DEAD. The region spanning 228–422 is the Helicase C-terminal domain; it reads QLVHLLIENK…KDKLQQEKRG (195 aa). The interval 413-465 is disordered; that stretch reads KDKLQQEKRGKRKKSSKEAVDDSNKASRKRKLTGRQRQTIQTAQDEEEMNLRL. Residues 428-437 are compositionally biased toward basic and acidic residues; it reads SKEAVDDSNK. Acidic residues predominate over residues 456 to 465; that stretch reads QDEEEMNLRL.

It belongs to the DEAD box helicase family. DDX55/SPB4 subfamily.

The catalysed reaction is ATP + H2O = ADP + phosphate + H(+). The chain is DEAD-box ATP-dependent RNA helicase 55 (RH55) from Arabidopsis thaliana (Mouse-ear cress).